Here is a 79-residue protein sequence, read N- to C-terminus: ATP synthase subunit c (79 aa).

The next 2 helical transmembrane spans lie at 11–31 (MAAA…IGIL) and 53–73 (FFIV…LGLY).

It belongs to the ATPase C chain family. As to quaternary structure, F-type ATPases have 2 components, F(1) - the catalytic core - and F(0) - the membrane proton channel. F(1) has five subunits: alpha(3), beta(3), gamma(1), delta(1), epsilon(1). F(0) has three main subunits: a(1), b(2) and c(10-14). The alpha and beta chains form an alternating ring which encloses part of the gamma chain. F(1) is attached to F(0) by a central stalk formed by the gamma and epsilon chains, while a peripheral stalk is formed by the delta and b chains.

Its subcellular location is the cell inner membrane. Its function is as follows. F(1)F(0) ATP synthase produces ATP from ADP in the presence of a proton or sodium gradient. F-type ATPases consist of two structural domains, F(1) containing the extramembraneous catalytic core and F(0) containing the membrane proton channel, linked together by a central stalk and a peripheral stalk. During catalysis, ATP synthesis in the catalytic domain of F(1) is coupled via a rotary mechanism of the central stalk subunits to proton translocation. In terms of biological role, key component of the F(0) channel; it plays a direct role in translocation across the membrane. A homomeric c-ring of between 10-14 subunits forms the central stalk rotor element with the F(1) delta and epsilon subunits. This is ATP synthase subunit c from Yersinia enterocolitica serotype O:8 / biotype 1B (strain NCTC 13174 / 8081).